Reading from the N-terminus, the 717-residue chain is Homeobox protein araucan (717 aa).

Disordered stretches follow at residues 46 to 80 (APAMSPTGGQDCQGSQPSGGAGGDASSGALSPNAL), 94 to 130 (GGSSAGGGGPADLATGGSLDGNGVGTTPTAGGAGGGG), 317 to 371 (NKMT…AIDE), 395 to 418 (SGGYPGGGGSSSGHPGGYHPYHHQ), 478 to 516 (TPPPAYMGHQSMPLQQQQQQQQQQQQAQHQYPPSEAGRD), 549 to 615 (TNNS…ASQR), and 675 to 717 (ARLG…KFTN). The segment covering 94-103 (GGSSAGGGGP) has biased composition (gly residues). Positions 255 to 317 (LAARRKNATR…NARRRLKKEN (63 aa)) form a DNA-binding region, homeobox; TALE-type. A compositionally biased stretch (basic and acidic residues) spans 317–327 (NKMTWEPKNRT). Serine 336 is modified (phosphoserine). Positions 337-347 (DDEKDKEDLEP) are enriched in basic and acidic residues. Residues 395–410 (SGGYPGGGGSSSGHPG) are compositionally biased toward gly residues. 4 stretches are compositionally biased toward low complexity: residues 492-507 (QQQQQQQQQQQQAQHQ), 559-589 (PPQQQQPQQQQQQLQQGGTIHTTGSSSGPII), 599-614 (QQQQQLQQQSQSTASQ), and 687-698 (SSGNSSSSSSSS).

This sequence belongs to the TALE/IRO homeobox family.

The protein resides in the nucleus. Its function is as follows. Controls proneural and vein forming genes. Positive transcriptional controller of AC-SC (achaete-scute). May act as an activator that interacts with the transcriptional complex assembled on the AC and SC promoters and participates in transcription initiation. This Drosophila melanogaster (Fruit fly) protein is Homeobox protein araucan (ara).